We begin with the raw amino-acid sequence, 371 residues long: Peptide chain release factor 2 (371 aa).

N5-methylglutamine is present on glutamine 250.

This sequence belongs to the prokaryotic/mitochondrial release factor family. In terms of processing, methylated by PrmC. Methylation increases the termination efficiency of RF2.

It is found in the cytoplasm. Its function is as follows. Peptide chain release factor 2 directs the termination of translation in response to the peptide chain termination codons UGA and UAA. This chain is Peptide chain release factor 2, found in Paramagnetospirillum magneticum (strain ATCC 700264 / AMB-1) (Magnetospirillum magneticum).